A 202-amino-acid polypeptide reads, in one-letter code: uncharacterized protein (202 aa).

An HTH tetR-type domain is found at 14 to 74 (NAKTERILDV…AMADRYFQRC (61 aa)).

This is an uncharacterized protein from Xanthobacter autotrophicus.